The sequence spans 260 residues: Kallikrein-8 (260 aa).

The signal sequence occupies residues Met1–Ala28. Residues Gln29–Lys32 constitute a propeptide that is removed on maturation. The region spanning Val33–Gly257 is the Peptidase S1 domain. Cystine bridges form between Cys39–Cys173, Cys58–Cys74, Cys145–Cys246, Cys152–Cys218, Cys184–Cys198, and Cys208–Cys233. His73 functions as the Charge relay system in the catalytic mechanism. N-linked (GlcNAc...) asparagine glycosylation is present at Asn110. Residue Asp120 is the Charge relay system of the active site. Residue Ser212 is the Charge relay system of the active site.

The protein belongs to the peptidase S1 family. Kallikrein subfamily. Interacts with SPINK9. As to expression, isoform 1 is predominantly expressed in the pancreas. Isoform 2 is expressed in adult brain and hippocampus. Isoform 1 and isoform 2 are found in fetal brain and placenta. Detected in salivary gland, uterus, thymus, breast, testis and kidney but not in spleen, liver, lung or normal ovarian tissue. Displays an 11.5-fold increase in Alzheimer disease hippocampus compared to controls and is overexpressed in some ovarian carcinomas. Expressed at low levels in normal skin while high levels are found in psoriasis vulgaris, seborrheic keratosis, lichen planus and squamous cell carcinoma skin samples. Expressed in the keratinocytes.

It is found in the secreted. Its subcellular location is the cytoplasm. It carries out the reaction Cleavage of amide substrates following the basic amino acids Arg or Lys at the P1 position, with a preference for Arg over Lys.. With respect to regulation, inhibited by a range of serine protease inhibitors including antipain, aprotinin, leupeptin, benzamidine and soybean trypsin inhibitor. Serine protease which is capable of degrading a number of proteins such as casein, fibrinogen, kininogen, fibronectin and collagen type IV. Also cleaves L1CAM in response to increased neural activity. Induces neurite outgrowth and fasciculation of cultured hippocampal neurons. Plays a role in the formation and maturation of orphan and small synaptic boutons in the Schaffer-collateral pathway, regulates Schaffer-collateral long-term potentiation in the hippocampus and is required for memory acquisition and synaptic plasticity. Involved in skin desquamation and keratinocyte proliferation. Plays a role in the secondary phase of pathogenesis following spinal cord injury. The sequence is that of Kallikrein-8 (KLK8) from Homo sapiens (Human).